The following is a 201-amino-acid chain: Extracellular superoxide dismutase [Cu-Zn] (201 aa).

A signal peptide spans 1-42 (MINSFIVIFLSFLIFINYANLVCVEATHVYGRRSHSNGMHGN). The Cu cation site is built by histidine 89, histidine 91, and histidine 106. A disulfide bridge links cysteine 100 with cysteine 192. Positions 106, 114, 123, and 126 each coordinate Zn(2+). Histidine 163 lines the Cu cation pocket.

This sequence belongs to the Cu-Zn superoxide dismutase family. In terms of assembly, homodimer. Cu cation serves as cofactor. Zn(2+) is required as a cofactor.

It is found in the secreted. The protein localises to the extracellular space. The enzyme catalyses 2 superoxide + 2 H(+) = H2O2 + O2. In terms of biological role, destroys radicals which are normally produced within the cells and which are toxic to biological systems. May act in the parasite defense against phagocyte-generated reactive oxygen species. This Onchocerca volvulus protein is Extracellular superoxide dismutase [Cu-Zn] (sod-4).